A 453-amino-acid chain; its full sequence is Frizzled/smoothened-like sans CRD protein G (453 aa).

An N-terminal signal peptide occupies residues 1–24 (MIYILKNFIIILFFLLIILKRIES). Over 25–89 (QSLPSLPSPT…PFFTLDEWNK (65 aa)) the chain is Extracellular. N49 and N67 each carry an N-linked (GlcNAc...) asparagine glycan. The helical transmembrane segment at 90-110 (FLYMSLVMGTISFLCGLFLLI) threads the bilayer. Residues 111 to 124 (TYSPIVNKTHNRHT) lie on the Cytoplasmic side of the membrane. Residues 125-145 (IGVMCMSFGVCLAMCSDMWNF) traverse the membrane as a helical segment. Over 146-170 (GSNFTDQKSICPSPGQYLTTSNSRC) the chain is Extracellular. N148 is a glycosylation site (N-linked (GlcNAc...) asparagine). Residues 171–191 (LGSGIVLQFGGVFGFLNWTLL) traverse the membrane as a helical segment. The Cytoplasmic portion of the chain corresponds to 192 to 209 (SFDLFMNIKGIITKNYDK). The helical transmembrane segment at 210–230 (YYFVATFIIAIIFTFVPIVND) threads the bilayer. At 231–250 (QYSMSYIGLGCWLGSAVYQL) the chain is on the extracellular side. The chain crosses the membrane as a helical span at residues 251–271 (IFFWILLSICLIVSSVFIILI). The Cytoplasmic portion of the chain corresponds to 272-296 (LKEIYIIIKQSKQKTSLKGNIRPLL). A helical transmembrane segment spans residues 297–317 (CITVTSFAFFYMFFYYISIVI). Residues 318–352 (EGDYYERILNEYTDCLMDPTKDVSECKFPRMSVAN) are Extracellular-facing. The chain crosses the membrane as a helical span at residues 353-373 (EFVFLLCLRLLGIGAFIFYGI). The Cytoplasmic segment spans residues 374–453 (NKEVKKIWLN…DDNFKPIIIK (80 aa)).

Belongs to the G-protein coupled receptor Fz/Smo family.

It localises to the membrane. In Dictyostelium discoideum (Social amoeba), this protein is Frizzled/smoothened-like sans CRD protein G (fscG).